A 307-amino-acid polypeptide reads, in one-letter code: Elongation factor Ts (307 aa).

Residues 80-83 form an involved in Mg(2+) ion dislocation from EF-Tu region; sequence TDFV.

This sequence belongs to the EF-Ts family.

Its subcellular location is the cytoplasm. Functionally, associates with the EF-Tu.GDP complex and induces the exchange of GDP to GTP. It remains bound to the aminoacyl-tRNA.EF-Tu.GTP complex up to the GTP hydrolysis stage on the ribosome. This chain is Elongation factor Ts, found in Methylobacterium sp. (strain 4-46).